The following is a 677-amino-acid chain: Fermitin family homolog 1 (677 aa).

One can recognise an FERM domain in the interval 96-653 (MLRLRLPNLK…HEYIGGYIFL (558 aa)). 3 positions are modified to phosphoserine: serine 170, serine 179, and serine 361. The PH domain occupies 377 to 473 (KLFRPKKLLP…WMAACMLASK (97 aa)).

This sequence belongs to the kindlin family. As to quaternary structure, interacts with the cytoplasmic domain of integrins ITGB1 and ITGB3. In terms of tissue distribution, expressed in brain, skeletal muscle, kidney, colon, adrenal gland, prostate, and placenta. Weakly or not expressed in heart, thymus, spleen, liver, small intestine, bone marrow, lung and peripheral blood leukocytes. Overexpressed in some colon and lung tumors. In skin, it is localized within the epidermis and particularly in basal keratocytes. Not detected in epidermal melanocytes and dermal fibroblasts.

Its subcellular location is the cytoplasm. The protein resides in the cytoskeleton. It localises to the cell junction. It is found in the focal adhesion. The protein localises to the cell projection. Its subcellular location is the ruffle membrane. Involved in cell adhesion. Contributes to integrin activation. When coexpressed with talin, potentiates activation of ITGA2B. Required for normal keratinocyte proliferation. Required for normal polarization of basal keratinocytes in skin, and for normal cell shape. Required for normal adhesion of keratinocytes to fibronectin and laminin, and for normal keratinocyte migration to wound sites. May mediate TGF-beta 1 signaling in tumor progression. This Homo sapiens (Human) protein is Fermitin family homolog 1 (FERMT1).